A 106-amino-acid polypeptide reads, in one-letter code: Iron-sulfur cluster assembly protein CyaY (106 aa).

It belongs to the frataxin family.

Its function is as follows. Involved in iron-sulfur (Fe-S) cluster assembly. May act as a regulator of Fe-S biogenesis. In Pectobacterium carotovorum subsp. carotovorum (strain PC1), this protein is Iron-sulfur cluster assembly protein CyaY.